The primary structure comprises 236 residues: ATP phosphoribosyltransferase (236 aa).

The protein belongs to the ATP phosphoribosyltransferase family. Short subfamily. As to quaternary structure, heteromultimer composed of HisG and HisZ subunits.

The protein localises to the cytoplasm. It catalyses the reaction 1-(5-phospho-beta-D-ribosyl)-ATP + diphosphate = 5-phospho-alpha-D-ribose 1-diphosphate + ATP. The protein operates within amino-acid biosynthesis; L-histidine biosynthesis; L-histidine from 5-phospho-alpha-D-ribose 1-diphosphate: step 1/9. Its function is as follows. Catalyzes the condensation of ATP and 5-phosphoribose 1-diphosphate to form N'-(5'-phosphoribosyl)-ATP (PR-ATP). Has a crucial role in the pathway because the rate of histidine biosynthesis seems to be controlled primarily by regulation of HisG enzymatic activity. This chain is ATP phosphoribosyltransferase (hisG), found in Cereibacter sphaeroides (strain ATCC 17023 / DSM 158 / JCM 6121 / CCUG 31486 / LMG 2827 / NBRC 12203 / NCIMB 8253 / ATH 2.4.1.) (Rhodobacter sphaeroides).